The following is a 320-amino-acid chain: Acetyl-coenzyme A carboxylase carboxyl transferase subunit beta (320 aa).

A CoA carboxyltransferase N-terminal domain is found at 25-294 (LWRKCPECGT…AIVGDLPAPD (270 aa)). Positions 29, 32, 48, and 51 each coordinate Zn(2+). Residues 29–51 (CPECGTMLFHRELSDNLFVCISC) form a C4-type zinc finger. The disordered stretch occupies residues 290-320 (LPAPDPAPATPEPQKAAPSAPAQDKPGAGRS).

The protein belongs to the AccD/PCCB family. Acetyl-CoA carboxylase is a heterohexamer composed of biotin carboxyl carrier protein (AccB), biotin carboxylase (AccC) and two subunits each of ACCase subunit alpha (AccA) and ACCase subunit beta (AccD). Zn(2+) is required as a cofactor.

It is found in the cytoplasm. The catalysed reaction is N(6)-carboxybiotinyl-L-lysyl-[protein] + acetyl-CoA = N(6)-biotinyl-L-lysyl-[protein] + malonyl-CoA. It functions in the pathway lipid metabolism; malonyl-CoA biosynthesis; malonyl-CoA from acetyl-CoA: step 1/1. Component of the acetyl coenzyme A carboxylase (ACC) complex. Biotin carboxylase (BC) catalyzes the carboxylation of biotin on its carrier protein (BCCP) and then the CO(2) group is transferred by the transcarboxylase to acetyl-CoA to form malonyl-CoA. The protein is Acetyl-coenzyme A carboxylase carboxyl transferase subunit beta of Dinoroseobacter shibae (strain DSM 16493 / NCIMB 14021 / DFL 12).